The primary structure comprises 51 residues: Insulin (51 aa).

3 disulfide bridges follow: cysteine 7-cysteine 37, cysteine 19-cysteine 50, and cysteine 36-cysteine 41.

It belongs to the insulin family. In terms of assembly, heterodimer of a B chain and an A chain linked by two disulfide bonds.

Its subcellular location is the secreted. Its function is as follows. Insulin decreases blood glucose concentration. It increases cell permeability to monosaccharides, amino acids and fatty acids. It accelerates glycolysis, the pentose phosphate cycle, and glycogen synthesis in liver. This is Insulin (INS) from Balaenoptera borealis (Sei whale).